Consider the following 492-residue polypeptide: uncharacterized protein (492 aa).

This sequence belongs to the FGGY kinase family.

This is an uncharacterized protein from Archaeoglobus fulgidus (strain ATCC 49558 / DSM 4304 / JCM 9628 / NBRC 100126 / VC-16).